Consider the following 115-residue polypeptide: U3-lycotoxin-Ls1u (115 aa).

The N-terminal stretch at 1 to 20 (MKFVLLFGVLLVTLFSYSSA) is a signal peptide. A propeptide spanning residues 21–44 (EMLDDFDQADEDELLSLIEKEEAR) is cleaved from the precursor. 3 disulfides stabilise this stretch: Cys-48–Cys-63, Cys-55–Cys-72, and Cys-62–Cys-87.

It belongs to the neurotoxin 19 (CSTX) family. 01 subfamily. As to expression, expressed by the venom gland.

It localises to the secreted. The chain is U3-lycotoxin-Ls1u from Lycosa singoriensis (Wolf spider).